Reading from the N-terminus, the 39-residue chain is MERFIKRLSASCESTIHHKVYQIMNEAKTEFEKVLKKLK.

The protein is SPbeta prophage-derived uncharacterized protein YorT (yorT) of Bacillus subtilis (strain 168).